A 601-amino-acid chain; its full sequence is Elongation factor 4 (601 aa).

Positions 6–188 (SHIRNFSIIA…QIVHRVPAPE (183 aa)) constitute a tr-type G domain. GTP-binding positions include 18 to 23 (DHGKST) and 135 to 138 (NKID).

This sequence belongs to the TRAFAC class translation factor GTPase superfamily. Classic translation factor GTPase family. LepA subfamily.

The protein resides in the cell inner membrane. It catalyses the reaction GTP + H2O = GDP + phosphate + H(+). In terms of biological role, required for accurate and efficient protein synthesis under certain stress conditions. May act as a fidelity factor of the translation reaction, by catalyzing a one-codon backward translocation of tRNAs on improperly translocated ribosomes. Back-translocation proceeds from a post-translocation (POST) complex to a pre-translocation (PRE) complex, thus giving elongation factor G a second chance to translocate the tRNAs correctly. Binds to ribosomes in a GTP-dependent manner. The protein is Elongation factor 4 of Anaeromyxobacter sp. (strain K).